The sequence spans 119 residues: Large ribosomal subunit protein bL20 (119 aa).

Belongs to the bacterial ribosomal protein bL20 family.

Its function is as follows. Binds directly to 23S ribosomal RNA and is necessary for the in vitro assembly process of the 50S ribosomal subunit. It is not involved in the protein synthesizing functions of that subunit. The sequence is that of Large ribosomal subunit protein bL20 from Stenotrophomonas maltophilia (strain K279a).